The sequence spans 228 residues: 2,3-bisphosphoglycerate-dependent phosphoglycerate mutase (228 aa).

Substrate-binding positions include 8-15 (RHGQSVWN), 21-22 (TG), Arg60, 87-90 (ERHY), Lys98, 114-115 (RR), and 183-184 (GN). The active-site Tele-phosphohistidine intermediate is His9. Glu87 (proton donor/acceptor) is an active-site residue.

Belongs to the phosphoglycerate mutase family. BPG-dependent PGAM subfamily. Homodimer.

It carries out the reaction (2R)-2-phosphoglycerate = (2R)-3-phosphoglycerate. Its pathway is carbohydrate degradation; glycolysis; pyruvate from D-glyceraldehyde 3-phosphate: step 3/5. Its function is as follows. Catalyzes the interconversion of 2-phosphoglycerate and 3-phosphoglycerate. This Rhodospirillum centenum (strain ATCC 51521 / SW) protein is 2,3-bisphosphoglycerate-dependent phosphoglycerate mutase.